The sequence spans 334 residues: tRNA uridine(34) hydroxylase (334 aa).

Residues 123-217 (SDPDVILVDT…YLEEVKAEES (95 aa)) enclose the Rhodanese domain. The active-site Cysteine persulfide intermediate is Cys-177.

This sequence belongs to the TrhO family.

It carries out the reaction uridine(34) in tRNA + AH2 + O2 = 5-hydroxyuridine(34) in tRNA + A + H2O. Catalyzes oxygen-dependent 5-hydroxyuridine (ho5U) modification at position 34 in tRNAs. This is tRNA uridine(34) hydroxylase from Shewanella baltica (strain OS185).